A 296-amino-acid polypeptide reads, in one-letter code: Phosphatidylglycerol--prolipoprotein diacylglyceryl transferase (296 aa).

Transmembrane regions (helical) follow at residues 10–30 (IAFS…LAAF), 57–77 (LLFY…MLFY), 92–112 (VWEG…ACWL), and 119–139 (LHFF…LGFG). Residue R140 participates in a 1,2-diacyl-sn-glycero-3-phospho-(1'-sn-glycerol) binding. 3 helical membrane-spanning segments follow: residues 194–214 (QLYE…TFSM), 220–240 (YAVS…VEFV), and 254–274 (WLTM…VLLA).

Belongs to the Lgt family.

It localises to the cell inner membrane. It carries out the reaction L-cysteinyl-[prolipoprotein] + a 1,2-diacyl-sn-glycero-3-phospho-(1'-sn-glycerol) = an S-1,2-diacyl-sn-glyceryl-L-cysteinyl-[prolipoprotein] + sn-glycerol 1-phosphate + H(+). Its pathway is protein modification; lipoprotein biosynthesis (diacylglyceryl transfer). Catalyzes the transfer of the diacylglyceryl group from phosphatidylglycerol to the sulfhydryl group of the N-terminal cysteine of a prolipoprotein, the first step in the formation of mature lipoproteins. This is Phosphatidylglycerol--prolipoprotein diacylglyceryl transferase from Xanthomonas axonopodis pv. citri (strain 306).